Consider the following 356-residue polypeptide: Glycerol-1-phosphate dehydrogenase [NAD(P)+] (356 aa).

NAD(+) contacts are provided by residues 103-107 (GRSID) and 125-128 (TAAS). Asp-130 serves as a coordination point for substrate. Ser-134 lines the NAD(+) pocket. Asp-177 provides a ligand contact to substrate. Zn(2+)-binding residues include Asp-177 and His-257. His-261 is a substrate binding site. His-273 is a binding site for Zn(2+).

This sequence belongs to the glycerol-1-phosphate dehydrogenase family. The cofactor is Zn(2+).

Its subcellular location is the cytoplasm. It catalyses the reaction sn-glycerol 1-phosphate + NAD(+) = dihydroxyacetone phosphate + NADH + H(+). The catalysed reaction is sn-glycerol 1-phosphate + NADP(+) = dihydroxyacetone phosphate + NADPH + H(+). It functions in the pathway membrane lipid metabolism; glycerophospholipid metabolism. In terms of biological role, catalyzes the NAD(P)H-dependent reduction of dihydroxyacetonephosphate (DHAP or glycerone phosphate) to glycerol 1-phosphate (G1P). The G1P thus generated is used as the glycerophosphate backbone of phospholipids in the cellular membranes of Archaea. This chain is Glycerol-1-phosphate dehydrogenase [NAD(P)+], found in Methanosarcina barkeri (strain Fusaro / DSM 804).